The chain runs to 106 residues: Large ribosomal subunit protein uL23 (106 aa).

The protein belongs to the universal ribosomal protein uL23 family. As to quaternary structure, part of the 50S ribosomal subunit. Contacts protein L29, and trigger factor when it is bound to the ribosome.

In terms of biological role, one of the early assembly proteins it binds 23S rRNA. One of the proteins that surrounds the polypeptide exit tunnel on the outside of the ribosome. Forms the main docking site for trigger factor binding to the ribosome. The chain is Large ribosomal subunit protein uL23 from Neisseria gonorrhoeae (strain ATCC 700825 / FA 1090).